Reading from the N-terminus, the 116-residue chain is Ribonuclease P protein component (116 aa).

This sequence belongs to the RnpA family. Consists of a catalytic RNA component (M1 or rnpB) and a protein subunit.

The enzyme catalyses Endonucleolytic cleavage of RNA, removing 5'-extranucleotides from tRNA precursor.. Functionally, RNaseP catalyzes the removal of the 5'-leader sequence from pre-tRNA to produce the mature 5'-terminus. It can also cleave other RNA substrates such as 4.5S RNA. The protein component plays an auxiliary but essential role in vivo by binding to the 5'-leader sequence and broadening the substrate specificity of the ribozyme. This chain is Ribonuclease P protein component, found in Gluconacetobacter diazotrophicus (strain ATCC 49037 / DSM 5601 / CCUG 37298 / CIP 103539 / LMG 7603 / PAl5).